A 412-amino-acid polypeptide reads, in one-letter code: Candidapepsin-2 (412 aa).

A signal peptide (or 18, or 21) is located at residues 1–25 (MTTIAIFTKNVLLAIAFALFAQGAA). Positions 26–61 (IPDPAKRDDNPGFVALDFEVTRKPLDVNATSELSKR) are cleaved as a propeptide — activation peptide. Asn53 carries N-linked (GlcNAc...) asparagine glycosylation. In terms of domain architecture, Peptidase A1 spans 75 to 383 (YGIRVSVGSN…LDKETVLSRS (309 aa)). Residue Asp93 is part of the active site. Cys108 and Cys113 are joined by a disulfide. Asp273 is an active-site residue. The cysteines at positions 311 and 345 are disulfide-linked.

This sequence belongs to the peptidase A1 family. Post-translationally, O-glycosylated.

It is found in the secreted. The catalysed reaction is Preferential cleavage at the carboxyl of hydrophobic amino acids, but fails to cleave 15-Leu-|-Tyr-16, 16-Tyr-|-Leu-17 and 24-Phe-|-Phe-25 of insulin B chain. Activates trypsinogen, and degrades keratin.. In Candida parapsilosis (Yeast), this protein is Candidapepsin-2 (SAPP2).